The sequence spans 727 residues: Iron-sulfur clusters transporter ATM1, mitochondrial (727 aa).

Residues 1–25 (MLIGGAQNRLYQLRTSNILGLLRTR) constitute a mitochondrion transit peptide. Residues 26–138 (SALRVGSKVE…PRGNTKVKVR (113 aa)) are Mitochondrial matrix-facing. A disordered region spans residues 87-107 (KSKLPNEDTAHNASEKNSKKT). The span at 90-107 (LPNEDTAHNASEKNSKKT) shows a compositional bias: basic and acidic residues. Residues 139–160 (VLLALALLIGAKVLNVQVPFFF) traverse the membrane as a helical segment. Residues 139–429 (VLLALALLIG…LGSVYRELKQ (291 aa)) enclose the ABC transmembrane type-1 domain. Over 161–183 (KQIIDGMNVDWSDATVALPAALG) the chain is Mitochondrial intermembrane. The helical transmembrane segment at 184–207 (LTIMCYGLARFGAVLFGELRNAIF) threads the bilayer. Over 208 to 256 (ARVAQNAIRNVSLQTFEHLMKLDLGWHLSRQTGGLTRAMDRGTKGISYV) the chain is Mitochondrial matrix. The chain crosses the membrane as a helical span at residues 257–280 (LSAMVFHIIPITFEISVVCGILTY). Gln281 is a topological domain (mitochondrial intermembrane). A helical membrane pass occupies residues 282–302 (FGASFAGITFTTMLLYSIFTI). Over 303–368 (RTTAWRTRFR…SQVKVAQSLA (66 aa)) the chain is Mitochondrial matrix. Glutathione-binding positions include 308 to 312 (RTRFR) and 371 to 374 (NSGQ). The chain crosses the membrane as a helical span at residues 369–387 (FLNSGQSLIFTTALTGMMY). At 388–402 (MGCTGVIGGDLTVGD) the chain is on the mitochondrial intermembrane side. Residues 403–424 (LVLINQLVFQLSVPLNFLGSVY) traverse the membrane as a helical segment. Residue Gly421 coordinates glutathione. Residues 425–727 (RELKQSLIDM…ETLEKLNKSI (303 aa)) are Mitochondrial matrix-facing. The ABC transporter domain occupies 465–701 (IKFENVTFGY…ENSLYKELWR (237 aa)). ATP contacts are provided by residues Tyr474 and 498 to 509 (GPSGSGKSTVLK).

Belongs to the ABC transporter superfamily. ABCB family. Heavy Metal importer (TC 3.A.1.210) subfamily. Homodimer.

The protein resides in the mitochondrion inner membrane. Its function is as follows. Performs an essential function in the generation of cytoplasmic iron-sulfur proteins by mediating the ATP-dependent export of Fe/S cluster precursors synthesized by NFS1 and other mitochondrial proteins. Hydrolyzes ATP. Binds glutathione and may function by transporting a glutathione-conjugated iron-sulfur compound. The chain is Iron-sulfur clusters transporter ATM1, mitochondrial from Candida glabrata (strain ATCC 2001 / BCRC 20586 / JCM 3761 / NBRC 0622 / NRRL Y-65 / CBS 138) (Yeast).